Consider the following 320-residue polypeptide: tRNA U34 carboxymethyltransferase (320 aa).

Residues Lys89, Trp103, Lys108, Gly128, 150–152 (DPT), 179–180 (IE), Met194, Tyr198, and Arg313 each bind carboxy-S-adenosyl-L-methionine.

It belongs to the class I-like SAM-binding methyltransferase superfamily. CmoB family. In terms of assembly, homotetramer.

It carries out the reaction carboxy-S-adenosyl-L-methionine + 5-hydroxyuridine(34) in tRNA = 5-carboxymethoxyuridine(34) in tRNA + S-adenosyl-L-homocysteine + H(+). Its function is as follows. Catalyzes carboxymethyl transfer from carboxy-S-adenosyl-L-methionine (Cx-SAM) to 5-hydroxyuridine (ho5U) to form 5-carboxymethoxyuridine (cmo5U) at position 34 in tRNAs. This is tRNA U34 carboxymethyltransferase from Actinobacillus pleuropneumoniae serotype 3 (strain JL03).